The sequence spans 463 residues: Serine carboxypeptidase-like 32 (463 aa).

Residues 1–22 (MMNISNVSIALYLCTLFAFVSS) form the signal peptide. Cystine bridges form between Cys-86–Cys-345, Cys-249–Cys-262, and Cys-286–Cys-313. A glycan (N-linked (GlcNAc...) asparagine) is linked at Asn-137. The active site involves Ser-179. N-linked (GlcNAc...) asparagine glycans are attached at residues Asn-201 and Asn-250. Residues Asn-341 and Asn-354 are each glycosylated (N-linked (GlcNAc...) asparagine). Active-site residues include Asp-384 and His-436.

This sequence belongs to the peptidase S10 family. As to expression, expressed in flowers.

It localises to the secreted. Probable carboxypeptidase. The polypeptide is Serine carboxypeptidase-like 32 (SCPL32) (Arabidopsis thaliana (Mouse-ear cress)).